We begin with the raw amino-acid sequence, 830 residues long: Phenylalanine--tRNA ligase beta subunit (830 aa).

A tRNA-binding domain is found at 39–158 (GQSLDGVVVG…DDTPVGTPFP (120 aa)). The B5 domain occupies 417 to 492 (PAEKTIALRP…RLHGYDQIPE (76 aa)). The Mg(2+) site is built by Asp-470, Asp-476, Glu-479, and Glu-480. Residues 490 to 510 (IPEPERVPVPSRTPEQPPEET) form a disordered region. The FDX-ACB domain occupies 736 to 828 (SRFPVVDRDL…LAENHGARLR (93 aa)).

The protein belongs to the phenylalanyl-tRNA synthetase beta subunit family. Type 1 subfamily. As to quaternary structure, tetramer of two alpha and two beta subunits. Requires Mg(2+) as cofactor.

It is found in the cytoplasm. The catalysed reaction is tRNA(Phe) + L-phenylalanine + ATP = L-phenylalanyl-tRNA(Phe) + AMP + diphosphate + H(+). This chain is Phenylalanine--tRNA ligase beta subunit, found in Salinibacter ruber (strain DSM 13855 / M31).